The sequence spans 94 residues: MFKVNEYFDGTVKSIAFEGTEGPATVGVMAPGEYEFGTAKREIMHVVSGALTVKLPGSDNWETFNAGDKFNVAADSKFQLKVAVDTAYLCEYRD.

The protein belongs to the nucleoside phosphorylase PpnP family.

The catalysed reaction is a purine D-ribonucleoside + phosphate = a purine nucleobase + alpha-D-ribose 1-phosphate. It carries out the reaction adenosine + phosphate = alpha-D-ribose 1-phosphate + adenine. The enzyme catalyses cytidine + phosphate = cytosine + alpha-D-ribose 1-phosphate. It catalyses the reaction guanosine + phosphate = alpha-D-ribose 1-phosphate + guanine. The catalysed reaction is inosine + phosphate = alpha-D-ribose 1-phosphate + hypoxanthine. It carries out the reaction thymidine + phosphate = 2-deoxy-alpha-D-ribose 1-phosphate + thymine. The enzyme catalyses uridine + phosphate = alpha-D-ribose 1-phosphate + uracil. It catalyses the reaction xanthosine + phosphate = alpha-D-ribose 1-phosphate + xanthine. Its function is as follows. Catalyzes the phosphorolysis of diverse nucleosides, yielding D-ribose 1-phosphate and the respective free bases. Can use uridine, adenosine, guanosine, cytidine, thymidine, inosine and xanthosine as substrates. Also catalyzes the reverse reactions. The sequence is that of Pyrimidine/purine nucleoside phosphorylase from Pseudomonas putida (strain W619).